A 274-amino-acid chain; its full sequence is Prolyl 4-hydroxylase 13 (274 aa).

Over 1-10 the chain is Cytoplasmic; that stretch reads MRSYGKEKKL. The chain crosses the membrane as a helical; Signal-anchor for type II membrane protein span at residues 11 to 31; the sequence is VFPYVFIACCFFLAIFGFCFF. The Lumenal segment spans residues 32-274; sequence NLFSQGISFS…TKWIRDQTYD (243 aa). The Fe2OG dioxygenase domain maps to 151-270; it reads YYESFNILRY…KWVATKWIRD (120 aa). Residues H169 and D171 each contribute to the Fe cation site. Residue N242 is glycosylated (N-linked (GlcNAc...) asparagine). Position 251 (H251) interacts with Fe cation. K261 serves as a coordination point for 2-oxoglutarate.

The protein belongs to the P4HA family. Fe(2+) serves as cofactor. L-ascorbate is required as a cofactor. Expressed in epidermal root hair cells (trichoblasts) root hairless cells (atrichoblasts).

It localises to the endoplasmic reticulum membrane. The enzyme catalyses L-prolyl-[collagen] + 2-oxoglutarate + O2 = trans-4-hydroxy-L-prolyl-[collagen] + succinate + CO2. Catalyzes the post-translational formation of 4-hydroxyproline in -Xaa-Pro-Gly- sequences in proline-rich peptide sequences of plant glycoproteins and other proteins. Hydroxyprolines are important constituent of many plant cell wall glycoproteins such as extensins, hydroxyproline-rich glycoproteins, lectins and arabinogalactan proteins. Possesses high affinity for leucine-rich repeat and proline-rich extensins of root cell walls that are essential for root hair development. Hydroxyprolines define the subsequent O-glycosylation sites by arabinosyltransferases which elongate the O-arabinosides on extensins. The chain is Prolyl 4-hydroxylase 13 from Arabidopsis thaliana (Mouse-ear cress).